Consider the following 1049-residue polypeptide: FERM, ARHGEF and pleckstrin domain-containing protein 1 (1049 aa).

Positions 1–37 (MGEIEQKPTPASRLGAPENSGISTLERGQKPPPTPSG) are disordered. Phosphoserine occurs at positions 20 and 23. Thr24 is modified (phosphothreonine). Residues 40–320 (MTVKIQMLDD…EHHAFFRLFE (281 aa)) form the FERM domain. A phosphoserine mark is found at Ser340, Ser373, Ser389, Ser403, Ser427, Ser433, and Ser437. A disordered region spans residues 361-537 (FERKHSKIHS…TDDEEEGRRK (177 aa)). 2 stretches are compositionally biased toward polar residues: residues 371 to 395 (TRSL…SASL) and 402 to 412 (ESPSAQSCQQA). Residues 435–448 (SGSKAADGTAAAAP) show a composition bias toward low complexity. 2 stretches are compositionally biased toward polar residues: residues 473-492 (STGS…NSQG) and 499-514 (VTLS…QASP). A phosphoserine mark is found at Ser513 and Ser517. One can recognise a DH domain in the interval 543-734 (KAYYIAKEVS…TEMVAQLHGT (192 aa)). In terms of domain architecture, PH 1 spans 763–860 (EFIRLGSLSK…WLEDIQMAID (98 aa)). Ser837, Ser876, and Ser882 each carry phosphoserine. A disordered region spans residues 866 to 908 (NGPTPELLASSPPDNKSPDEATAADQESEDDLSASRTSLERQA). A Phosphothreonine modification is found at Thr887. Phosphoserine occurs at positions 893, 900, and 903. The region spanning 936–1033 (ENQLSGNLLR…WMEVIRSATS (98 aa)) is the PH 2 domain.

In terms of assembly, interacts with CADM1. Interacts with RAC1. Detected in forbrain (at protein level).

The protein resides in the cell membrane. It is found in the synapse. The protein localises to the synaptosome. Its subcellular location is the cytoplasm. It localises to the cytosol. The protein resides in the cell projection. It is found in the filopodium. The protein localises to the dendrite. Its subcellular location is the dendritic spine. Functionally, may play a role in semaphorin signaling. Functions as a guanine nucleotide exchange factor for RAC1. Plays a role in the assembly and disassembly of dendritic filopodia, the formation of dendritic spines, regulation of dendrite length and ultimately the formation of synapses. This Rattus norvegicus (Rat) protein is FERM, ARHGEF and pleckstrin domain-containing protein 1 (Farp1).